We begin with the raw amino-acid sequence, 133 residues long: Small ribosomal subunit protein uS12 (133 aa).

Residue D89 is modified to 3-methylthioaspartic acid. A disordered region spans residues 103–133; the sequence is DTAGVAGRTQRRSKYGAKRPKPGQAAPAKKK. Basic residues predominate over residues 111–123; sequence TQRRSKYGAKRPK. Residues 124–133 show a composition bias toward low complexity; it reads PGQAAPAKKK.

It belongs to the universal ribosomal protein uS12 family. Part of the 30S ribosomal subunit. Contacts proteins S8 and S17. May interact with IF1 in the 30S initiation complex.

With S4 and S5 plays an important role in translational accuracy. Functionally, interacts with and stabilizes bases of the 16S rRNA that are involved in tRNA selection in the A site and with the mRNA backbone. Located at the interface of the 30S and 50S subunits, it traverses the body of the 30S subunit contacting proteins on the other side and probably holding the rRNA structure together. The combined cluster of proteins S8, S12 and S17 appears to hold together the shoulder and platform of the 30S subunit. In Bacteroides thetaiotaomicron (strain ATCC 29148 / DSM 2079 / JCM 5827 / CCUG 10774 / NCTC 10582 / VPI-5482 / E50), this protein is Small ribosomal subunit protein uS12.